We begin with the raw amino-acid sequence, 292 residues long: uncharacterized protein (292 aa).

Positions glutamate 62–asparagine 81 are disordered.

This is an uncharacterized protein from Homo sapiens (Human).